The chain runs to 594 residues: Glutamate decarboxylase 1 (594 aa).

Residues 1-13 (MASSTPSSSATSS) show a composition bias toward low complexity. The interval 1 to 23 (MASSTPSSSATSSNAGADPNTTN) is disordered. Ser78 carries the phosphoserine modification. 190–192 (QLS) is a 4-aminobutanoate binding site. Residue Lys405 is modified to N6-(pyridoxal phosphate)lysine. Residue Arg567 coordinates 4-aminobutanoate.

It belongs to the group II decarboxylase family. Homodimer. Pyridoxal 5'-phosphate is required as a cofactor.

It carries out the reaction L-glutamate + H(+) = 4-aminobutanoate + CO2. Functionally, catalyzes the synthesis of the inhibitory neurotransmitter gamma-aminobutyric acid (GABA) with pyridoxal 5'-phosphate as cofactor. This Felis catus (Cat) protein is Glutamate decarboxylase 1 (GAD1).